A 308-amino-acid chain; its full sequence is Glutaminase (308 aa).

The substrate site is built by S66, N117, E161, N168, Y192, Y244, and V262.

Belongs to the glutaminase family. As to quaternary structure, homotetramer.

The catalysed reaction is L-glutamine + H2O = L-glutamate + NH4(+). This chain is Glutaminase, found in Salmonella agona (strain SL483).